Here is a 182-residue protein sequence, read N- to C-terminus: CD-NTase-associated protein 15 (182 aa).

The next 2 helical transmembrane spans lie at 11 to 31 and 33 to 53; these read ITGW…CTVW and IGWI…TIGY.

The protein belongs to the CBASS Cap15 membrane effector family. As to quaternary structure, the beta barrel domain oligomerizes; in the presence of cyclic nucleotides (probably 3',2'-cGAMP) higher-level oligomers occur.

The protein localises to the cell membrane. Effector protein of a CBASS antivirus system. CBASS (cyclic oligonucleotide-based antiphage signaling system) provides immunity against bacteriophage. The CD-NTase protein (CdnE) synthesizes cyclic nucleotides in response to infection; these serve as specific second messenger signals. The signals activate a diverse range of effectors, leading to bacterial cell death and thus abortive phage infection. This system triggers membrane disruption without lysis. A type I-B CBASS system. Binds cyclic nucleotide second messenger 3',2'-cGAMP, probably oligomerizing, and induces cell membrane shrinkage and rupture, leading to cell death. In terms of biological role, protects S.aureus against phage infection. When the CBASS operon (cdnE-cap15) is introduced in S.aureus strain RN4220 there is strong protection against lytic DNA phages 80alpha-vir and phi-NM1-gamma-6 but little to no protection against phages phi-NM4-gamma-4 or phi-12-gamma-3. This chain is CD-NTase-associated protein 15, found in Staphylococcus schleiferi.